Here is a 1093-residue protein sequence, read N- to C-terminus: Protein translocase subunit SecA (1093 aa).

ATP-binding positions include Q84, 102 to 106, and D491; that span reads GEGKT. Disordered stretches follow at residues 837-869 and 904-1062; these read QNLQEQSYKDPASDNLENNPEPKTGSQSQSEHE and SELE…TSEA. Composition is skewed to basic and acidic residues over residues 904-937, 944-971, and 978-1062; these read SELESKEKEQEEVKNQETQPKENKPAETKVDATK, EELKAKEVATVVEEKPKKVSKAKSEKLK, and PKDL…TSEA.

The protein belongs to the SecA family. Monomer and homodimer. Part of the essential Sec protein translocation apparatus which comprises SecA, SecYEG and auxiliary proteins SecDF. Other proteins may also be involved.

Its subcellular location is the cell membrane. The protein localises to the cytoplasm. It carries out the reaction ATP + H2O + cellular proteinSide 1 = ADP + phosphate + cellular proteinSide 2.. Functionally, part of the Sec protein translocase complex. Interacts with the SecYEG preprotein conducting channel. Has a central role in coupling the hydrolysis of ATP to the transfer of proteins into and across the cell membrane, serving as an ATP-driven molecular motor driving the stepwise translocation of polypeptide chains across the membrane. This Mycoplasmopsis synoviae (strain 53) (Mycoplasma synoviae) protein is Protein translocase subunit SecA.